A 156-amino-acid chain; its full sequence is Small ribosomal subunit protein uS17A (156 aa).

S2 carries the N-acetylserine modification. Glycyl lysine isopeptide (Lys-Gly) (interchain with G-Cter in ubiquitin) cross-links involve residues K15, K46, K56, K57, K79, K96, K105, K133, K141, and K148.

The protein belongs to the universal ribosomal protein uS17 family. As to quaternary structure, component of the small ribosomal subunit (SSU). Mature yeast ribosomes consist of a small (40S) and a large (60S) subunit. The 40S small subunit contains 1 molecule of ribosomal RNA (18S rRNA) and 33 different proteins (encoded by 57 genes). The large 60S subunit contains 3 rRNA molecules (25S, 5.8S and 5S rRNA) and 46 different proteins (encoded by 81 genes). In terms of processing, N-terminally acetylated by acetyltransferase NatA.

It localises to the cytoplasm. In terms of biological role, component of the ribosome, a large ribonucleoprotein complex responsible for the synthesis of proteins in the cell. The small ribosomal subunit (SSU) binds messenger RNAs (mRNAs) and translates the encoded message by selecting cognate aminoacyl-transfer RNA (tRNA) molecules. The large subunit (LSU) contains the ribosomal catalytic site termed the peptidyl transferase center (PTC), which catalyzes the formation of peptide bonds, thereby polymerizing the amino acids delivered by tRNAs into a polypeptide chain. The nascent polypeptides leave the ribosome through a tunnel in the LSU and interact with protein factors that function in enzymatic processing, targeting, and the membrane insertion of nascent chains at the exit of the ribosomal tunnel. This Saccharomyces cerevisiae (strain ATCC 204508 / S288c) (Baker's yeast) protein is Small ribosomal subunit protein uS17A.